A 284-amino-acid chain; its full sequence is Bifunctional protein FolD (284 aa).

NADP(+) contacts are provided by residues 165–167 (GRS), S190, and V231.

It belongs to the tetrahydrofolate dehydrogenase/cyclohydrolase family. In terms of assembly, homodimer.

It catalyses the reaction (6R)-5,10-methylene-5,6,7,8-tetrahydrofolate + NADP(+) = (6R)-5,10-methenyltetrahydrofolate + NADPH. The enzyme catalyses (6R)-5,10-methenyltetrahydrofolate + H2O = (6R)-10-formyltetrahydrofolate + H(+). It participates in one-carbon metabolism; tetrahydrofolate interconversion. Functionally, catalyzes the oxidation of 5,10-methylenetetrahydrofolate to 5,10-methenyltetrahydrofolate and then the hydrolysis of 5,10-methenyltetrahydrofolate to 10-formyltetrahydrofolate. This is Bifunctional protein FolD from Ruminiclostridium cellulolyticum (strain ATCC 35319 / DSM 5812 / JCM 6584 / H10) (Clostridium cellulolyticum).